We begin with the raw amino-acid sequence, 250 residues long: 2,3-bisphosphoglycerate-dependent phosphoglycerate mutase (250 aa).

Residues 8–15 (RHGESQWN), 21–22 (TG), Arg60, 87–90 (ERHY), Lys98, 114–115 (RR), and 183–184 (GN) each bind substrate. Catalysis depends on His9, which acts as the Tele-phosphohistidine intermediate. The active-site Proton donor/acceptor is the Glu87.

Belongs to the phosphoglycerate mutase family. BPG-dependent PGAM subfamily. Homodimer.

It catalyses the reaction (2R)-2-phosphoglycerate = (2R)-3-phosphoglycerate. It functions in the pathway carbohydrate degradation; glycolysis; pyruvate from D-glyceraldehyde 3-phosphate: step 3/5. Functionally, catalyzes the interconversion of 2-phosphoglycerate and 3-phosphoglycerate. The chain is 2,3-bisphosphoglycerate-dependent phosphoglycerate mutase from Bordetella avium (strain 197N).